A 504-amino-acid polypeptide reads, in one-letter code: 2-isopropylmalate synthase (504 aa).

In terms of domain architecture, Pyruvate carboxyltransferase spans 6–267; sequence IIVFDTTLRD…YTDINFKEIY (262 aa). 4 residues coordinate Mn(2+): Asp-15, His-201, His-203, and Asn-237. A regulatory domain region spans residues 391–504; the sequence is EIIALSSSEC…ALNSYISMKQ (114 aa).

It belongs to the alpha-IPM synthase/homocitrate synthase family. LeuA type 1 subfamily. Homodimer. It depends on Mn(2+) as a cofactor.

It is found in the cytoplasm. The catalysed reaction is 3-methyl-2-oxobutanoate + acetyl-CoA + H2O = (2S)-2-isopropylmalate + CoA + H(+). It functions in the pathway amino-acid biosynthesis; L-leucine biosynthesis; L-leucine from 3-methyl-2-oxobutanoate: step 1/4. In terms of biological role, catalyzes the condensation of the acetyl group of acetyl-CoA with 3-methyl-2-oxobutanoate (2-ketoisovalerate) to form 3-carboxy-3-hydroxy-4-methylpentanoate (2-isopropylmalate). The sequence is that of 2-isopropylmalate synthase from Campylobacter hominis (strain ATCC BAA-381 / DSM 21671 / CCUG 45161 / LMG 19568 / NCTC 13146 / CH001A).